We begin with the raw amino-acid sequence, 190 residues long: Scytalone dehydratase-like protein Arp1 (190 aa).

Residue Y67 participates in substrate binding. Catalysis depends on residues H102 and H127. A substrate-binding site is contributed by N148.

Belongs to the scytalone dehydratase family. As to quaternary structure, homotrimer. Each subunit contains an active site, located in the central part of the hydrophobic core of the monomer, which functions independently.

Its function is as follows. Scytalone dehydratase-like protein; part of the Pks2 gene cluster that mediates the formation of infectious structures (appressoria), enabling these fungi to kill insects faster. The product of the Pks2 gene cluster is different from the one of Pks1 and has still not been identified. The sequence is that of Scytalone dehydratase-like protein Arp1 from Metarhizium anisopliae (strain ARSEF 549).